The following is an 865-amino-acid chain: Protein translocase subunit SecA (865 aa).

ATP is bound by residues Gln93, 111–115, and Asp501; that span reads GEGKT. 4 residues coordinate Zn(2+): Cys841, Cys843, Cys852, and Cys853.

It belongs to the SecA family. In terms of assembly, monomer and homodimer. Part of the essential Sec protein translocation apparatus which comprises SecA, SecYEG and auxiliary proteins SecDF-YajC and YidC. Requires Zn(2+) as cofactor.

The protein resides in the cell inner membrane. It is found in the cytoplasm. It carries out the reaction ATP + H2O + cellular proteinSide 1 = ADP + phosphate + cellular proteinSide 2.. In terms of biological role, part of the Sec protein translocase complex. Interacts with the SecYEG preprotein conducting channel. Has a central role in coupling the hydrolysis of ATP to the transfer of proteins into and across the cell membrane, serving as an ATP-driven molecular motor driving the stepwise translocation of polypeptide chains across the membrane. This chain is Protein translocase subunit SecA, found in Helicobacter pylori (strain P12).